The following is a 398-amino-acid chain: Probable aminomethyltransferase (398 aa).

This sequence belongs to the GcvT family. The glycine cleavage system is composed of four proteins: P, T, L and H.

The catalysed reaction is N(6)-[(R)-S(8)-aminomethyldihydrolipoyl]-L-lysyl-[protein] + (6S)-5,6,7,8-tetrahydrofolate = N(6)-[(R)-dihydrolipoyl]-L-lysyl-[protein] + (6R)-5,10-methylene-5,6,7,8-tetrahydrofolate + NH4(+). Functionally, the glycine cleavage system catalyzes the degradation of glycine. This chain is Probable aminomethyltransferase, found in Thermococcus gammatolerans (strain DSM 15229 / JCM 11827 / EJ3).